Here is a 345-residue protein sequence, read N- to C-terminus: Anthranilate phosphoribosyltransferase (345 aa).

5-phospho-alpha-D-ribose 1-diphosphate-binding positions include Gly-84, 87-88 (GD), Thr-92, 94-97 (NIST), 112-120 (KHGNRSVSS), and Ser-124. Gly-84 provides a ligand contact to anthranilate. Ser-96 is a binding site for Mg(2+). Asn-115 is an anthranilate binding site. Residue Arg-170 participates in anthranilate binding. Mg(2+) contacts are provided by Asp-229 and Glu-230.

This sequence belongs to the anthranilate phosphoribosyltransferase family. In terms of assembly, homodimer. Mg(2+) serves as cofactor.

It catalyses the reaction N-(5-phospho-beta-D-ribosyl)anthranilate + diphosphate = 5-phospho-alpha-D-ribose 1-diphosphate + anthranilate. It participates in amino-acid biosynthesis; L-tryptophan biosynthesis; L-tryptophan from chorismate: step 2/5. Catalyzes the transfer of the phosphoribosyl group of 5-phosphorylribose-1-pyrophosphate (PRPP) to anthranilate to yield N-(5'-phosphoribosyl)-anthranilate (PRA). The sequence is that of Anthranilate phosphoribosyltransferase from Xanthomonas campestris pv. campestris (strain B100).